A 364-amino-acid chain; its full sequence is Lipid-A-disaccharide synthase (364 aa).

The protein belongs to the LpxB family.

It catalyses the reaction a lipid X + a UDP-2-N,3-O-bis[(3R)-3-hydroxyacyl]-alpha-D-glucosamine = a lipid A disaccharide + UDP + H(+). It functions in the pathway bacterial outer membrane biogenesis; LPS lipid A biosynthesis. In terms of biological role, condensation of UDP-2,3-diacylglucosamine and 2,3-diacylglucosamine-1-phosphate to form lipid A disaccharide, a precursor of lipid A, a phosphorylated glycolipid that anchors the lipopolysaccharide to the outer membrane of the cell. The protein is Lipid-A-disaccharide synthase of Campylobacter jejuni (strain RM1221).